Consider the following 274-residue polypeptide: MAIHLYKTSTPSTRNGAVDSQVKSNPRNHLIYGQHRCGKGRNARGIITAGHRGGGHKRLYRKIDFRRNEKNIYGRIVTIEYDPNRNAYICLIHYGDGEKKYILHPRGAIIGDTIVSGTEVPIKMGNALPLSDMPLGTAIHNIEITLGKGGQLARAAGAVAKLIAKEGKSATLKLPSGEVRLISKNCSATVGQVGNVGVNQKNLGRAGSKCWLGKRPVVRGVVMNPVDHPHGGGEGRAPIGRKKPATPWGFPALGRRSRKRKKYSDNLILRRRTK.

Disordered regions lie at residues 1–22 and 224–274; these read MAIH…DSQV and NPVD…RRTK.

Belongs to the universal ribosomal protein uL2 family. In terms of assembly, part of the 50S ribosomal subunit.

It localises to the plastid. The protein resides in the chloroplast. This Glycine max (Soybean) protein is Large ribosomal subunit protein uL2cy (rpl2-B).